We begin with the raw amino-acid sequence, 491 residues long: Glutamyl-tRNA(Gln) amidotransferase subunit A (491 aa).

Residues K76 and S154 each act as charge relay system in the active site. S178 acts as the Acyl-ester intermediate in catalysis.

The protein belongs to the amidase family. GatA subfamily. In terms of assembly, heterotrimer of A, B and C subunits.

It carries out the reaction L-glutamyl-tRNA(Gln) + L-glutamine + ATP + H2O = L-glutaminyl-tRNA(Gln) + L-glutamate + ADP + phosphate + H(+). Functionally, allows the formation of correctly charged Gln-tRNA(Gln) through the transamidation of misacylated Glu-tRNA(Gln) in organisms which lack glutaminyl-tRNA synthetase. The reaction takes place in the presence of glutamine and ATP through an activated gamma-phospho-Glu-tRNA(Gln). The polypeptide is Glutamyl-tRNA(Gln) amidotransferase subunit A (Cereibacter sphaeroides (strain KD131 / KCTC 12085) (Rhodobacter sphaeroides)).